A 107-amino-acid chain; its full sequence is Nucleoid-associated protein BMEA_A0033 (107 aa).

It belongs to the YbaB/EbfC family. In terms of assembly, homodimer.

It localises to the cytoplasm. The protein localises to the nucleoid. Its function is as follows. Binds to DNA and alters its conformation. May be involved in regulation of gene expression, nucleoid organization and DNA protection. In Brucella melitensis biotype 2 (strain ATCC 23457), this protein is Nucleoid-associated protein BMEA_A0033.